The sequence spans 587 residues: Putative inactive receptor-like protein kinase At1g64210 (587 aa).

The signal sequence occupies residues 1–19 (MQIFLFFFSLILCFVLISS). Residues 20-232 (QTLEDDKKAL…KTPFGLSQLA (213 aa)) are Extracellular-facing. N-linked (GlcNAc...) asparagine glycans are attached at residues N37 and N44. LRR repeat units lie at residues 89–112 (SLKFLSLRKNHFTGDFPSDFTNLK), 113–136 (SLTHLYLQHNHLSGPLLAIFSELK), 137–160 (NLKVLDLSNNGFNGSIPTSLSGLT), 161–183 (SLQVLNLANNSFSGEIPNLHLPK), and 184–205 (LSQINLSNNKLIGTIPKSLQRF). N-linked (GlcNAc...) asparagine glycosylation is found at N149, N169, N188, and N214. Residues 233 to 253 (FLLILSAACVLCVSGLSFIMI) traverse the membrane as a helical segment. Over 254–587 (TCFGKTRISG…IEDIRSVDAE (334 aa)) the chain is Cytoplasmic. Residues 307-581 (SSSAEVLGKG…AQVLKLIEDI (275 aa)) enclose the Protein kinase domain. S309 is subject to Phosphoserine. ATP is bound by residues 313–321 (LGKGAFGTT) and K335. S386 carries the phosphoserine modification. 4 positions are modified to phosphothreonine: T462, T463, T466, and T477.

The protein resides in the cell membrane. The polypeptide is Putative inactive receptor-like protein kinase At1g64210 (Arabidopsis thaliana (Mouse-ear cress)).